A 273-amino-acid chain; its full sequence is Energy-coupling factor transporter ATP-binding protein EcfA (273 aa).

One can recognise an ABC transporter domain in the interval 2-237 (ISIRDLTYFY…RASLLALGLA (236 aa)). 36–43 (GRNGSGKS) contributes to the ATP binding site.

It belongs to the ABC transporter superfamily. Energy-coupling factor EcfA family. In terms of assembly, forms a stable energy-coupling factor (ECF) transporter complex composed of 2 membrane-embedded substrate-binding proteins (S component), 2 ATP-binding proteins (A component) and 2 transmembrane proteins (T component).

The protein resides in the cell membrane. ATP-binding (A) component of a common energy-coupling factor (ECF) ABC-transporter complex. Unlike classic ABC transporters this ECF transporter provides the energy necessary to transport a number of different substrates. The polypeptide is Energy-coupling factor transporter ATP-binding protein EcfA (Syntrophomonas wolfei subsp. wolfei (strain DSM 2245B / Goettingen)).